The sequence spans 490 residues: GTPase Der (490 aa).

2 consecutive EngA-type G domains span residues 3–166 and 203–376; these read PVVA…VDEI and IKLA…DSST. Residues 9 to 16, 56 to 60, 118 to 121, 209 to 216, 256 to 260, and 321 to 324 contribute to the GTP site; these read GRPNVGKS, DTGGI, NKTD, DTAGV, and NKWD. The region spanning 377 to 461 is the KH-like domain; that stretch reads RRQSTAMLTR…PIRIQFKEGE (85 aa).

The protein belongs to the TRAFAC class TrmE-Era-EngA-EngB-Septin-like GTPase superfamily. EngA (Der) GTPase family. Associates with the 50S ribosomal subunit.

Functionally, GTPase that plays an essential role in the late steps of ribosome biogenesis. This Enterobacter sp. (strain 638) protein is GTPase Der.